The following is a 378-amino-acid chain: Erythronate-4-phosphate dehydrogenase (378 aa).

Substrate is bound by residues Ser-45 and Thr-66. Position 146 (Asp-146) interacts with NAD(+). Arg-207 is an active-site residue. Asp-231 lines the NAD(+) pocket. The active site involves Glu-236. The active-site Proton donor is the His-253. NAD(+) is bound at residue Gly-256.

The protein belongs to the D-isomer specific 2-hydroxyacid dehydrogenase family. PdxB subfamily. As to quaternary structure, homodimer.

It localises to the cytoplasm. It carries out the reaction 4-phospho-D-erythronate + NAD(+) = (R)-3-hydroxy-2-oxo-4-phosphooxybutanoate + NADH + H(+). The protein operates within cofactor biosynthesis; pyridoxine 5'-phosphate biosynthesis; pyridoxine 5'-phosphate from D-erythrose 4-phosphate: step 2/5. Catalyzes the oxidation of erythronate-4-phosphate to 3-hydroxy-2-oxo-4-phosphonooxybutanoate. The sequence is that of Erythronate-4-phosphate dehydrogenase from Wigglesworthia glossinidia brevipalpis.